Reading from the N-terminus, the 528-residue chain is Succinate-semialdehyde dehydrogenase, mitochondrial (528 aa).

Residues 1–34 (MVIGAAARVAIGGCRKLISSHTSLLLVSSQCRQM) constitute a mitochondrion transit peptide. 196 to 198 (TPW) contributes to the NAD(+) binding site. Position 207 (R207) interacts with substrate. Residues 222-225 (KPSE), 275-280 (GSTAVG), and E297 each bind NAD(+). E297 acts as the Proton acceptor in catalysis. R325 is a binding site for substrate. Catalysis depends on C331, which acts as the Nucleophile. A disulfide bridge links C331 with C333. 428-430 (EIF) contacts NAD(+). S488 is a substrate binding site.

This sequence belongs to the aldehyde dehydrogenase family. As to quaternary structure, homotetramer. As to expression, expressed in developing leaf tissues.

It is found in the mitochondrion matrix. It catalyses the reaction succinate semialdehyde + NAD(+) + H2O = succinate + NADH + 2 H(+). It participates in amino-acid degradation; 4-aminobutanoate degradation. Its activity is regulated as follows. Competitive inhibition by NADH. Inhibited by ATP, ADP and AMP. Redox-regulated. Inhibited under oxydizing conditions. Functionally, oxidizes specifically succinate semialdehyde. Involved in plant response to environmental stress by preventing the accumulation of reactive oxygen species, probably by regulating proline, gamma-hydroxybutyrate (GHB) and gamma-aminobutyrate (GABA) levels. Required for the maintenance of the shoot apical meristem (SAM) structure and subsequent adaxial-abaxial axis-dependent development of cotyledons and leaves. This Arabidopsis thaliana (Mouse-ear cress) protein is Succinate-semialdehyde dehydrogenase, mitochondrial.